Reading from the N-terminus, the 431-residue chain is Adenylosuccinate synthetase (431 aa).

GTP-binding positions include 12–18 and 40–42; these read GDEGKGK and GHT. The active-site Proton acceptor is the Asp13. Mg(2+) is bound by residues Asp13 and Gly40. IMP contacts are provided by residues 13 to 16, 38 to 41, Thr128, Arg142, Gln225, Thr240, and Arg304; these read DEGK and NAGH. The Proton donor role is filled by His41. Position 300–306 (300–306) interacts with substrate; that stretch reads TTTGRPR. GTP is bound by residues Arg306, 332–334, and 414–416; these read KLD and GVG.

The protein belongs to the adenylosuccinate synthetase family. Homodimer. The cofactor is Mg(2+).

It localises to the cytoplasm. It carries out the reaction IMP + L-aspartate + GTP = N(6)-(1,2-dicarboxyethyl)-AMP + GDP + phosphate + 2 H(+). It functions in the pathway purine metabolism; AMP biosynthesis via de novo pathway; AMP from IMP: step 1/2. In terms of biological role, plays an important role in the de novo pathway of purine nucleotide biosynthesis. Catalyzes the first committed step in the biosynthesis of AMP from IMP. This chain is Adenylosuccinate synthetase, found in Thermomicrobium roseum (strain ATCC 27502 / DSM 5159 / P-2).